A 512-amino-acid polypeptide reads, in one-letter code: 2-isopropylmalate synthase (512 aa).

Positions 5-268 constitute a Pyruvate carboxyltransferase domain; it reads LIIFDTTLRD…ELGIDTQHIV (264 aa). Asp14, His202, His204, and Asn239 together coordinate Mn(2+). Positions 394–512 are regulatory domain; that stretch reads GFVSLSQRSE…SKAERVAAQG (119 aa).

The protein belongs to the alpha-IPM synthase/homocitrate synthase family. LeuA type 1 subfamily. In terms of assembly, homodimer. The cofactor is Mn(2+).

The protein localises to the cytoplasm. The catalysed reaction is 3-methyl-2-oxobutanoate + acetyl-CoA + H2O = (2S)-2-isopropylmalate + CoA + H(+). It participates in amino-acid biosynthesis; L-leucine biosynthesis; L-leucine from 3-methyl-2-oxobutanoate: step 1/4. Functionally, catalyzes the condensation of the acetyl group of acetyl-CoA with 3-methyl-2-oxobutanoate (2-ketoisovalerate) to form 3-carboxy-3-hydroxy-4-methylpentanoate (2-isopropylmalate). The polypeptide is 2-isopropylmalate synthase (Paracidovorax citrulli (strain AAC00-1) (Acidovorax citrulli)).